Reading from the N-terminus, the 136-residue chain is Large-conductance mechanosensitive channel (136 aa).

A run of 2 helical transmembrane segments spans residues 10-30 and 76-96; these read FAMR…AAFG and GSFI…FSAV.

The protein belongs to the MscL family. Homopentamer.

Its subcellular location is the cell inner membrane. Channel that opens in response to stretch forces in the membrane lipid bilayer. May participate in the regulation of osmotic pressure changes within the cell. The sequence is that of Large-conductance mechanosensitive channel from Yersinia enterocolitica serotype O:8 / biotype 1B (strain NCTC 13174 / 8081).